A 246-amino-acid polypeptide reads, in one-letter code: Serine protease 1 (246 aa).

A signal peptide spans 1–17 (MKTFIFLALLGAAVAFP). Positions 18–23 (VDDDDK) are cleaved as a propeptide — activation peptide. In terms of domain architecture, Peptidase S1 spans 24 to 244 (IVGGYTCGAN…YVSWIKQTIA (221 aa)). Cystine bridges form between C30–C160, C48–C64, C132–C233, C139–C206, C171–C185, and C196–C220. The active-site Charge relay system is the H63. E75, N77, V80, and E85 together coordinate Ca(2+). Catalysis depends on D107, which acts as the Charge relay system. Substrate contacts are provided by residues 194–195 (DS), 197–198 (QG), and S200. S200 functions as the Charge relay system in the catalytic mechanism.

Belongs to the peptidase S1 family. As to quaternary structure, interacts with SERPINA1. The cofactor is Ca(2+). Autocatalytic cleavage after Lys-23 leads to beta-trypsin by releasing a terminal hexapeptide. Subsequent cleavage after Lys-148 leads to alpha-trypsin. Further cleavage after Lys-193 yields pseudotrypsin. A cleavage may also occur after Arg-122. In terms of processing, not sulfated on tyrosine residue(s). In terms of tissue distribution, synthesized in the acinar cells of the pancreas.

The protein localises to the secreted. It is found in the extracellular space. The catalysed reaction is Preferential cleavage: Arg-|-Xaa, Lys-|-Xaa.. Is inhibited by scorpion cyclotide trypsin inhibitor TopI1. The polypeptide is Serine protease 1 (PRSS1) (Bos taurus (Bovine)).